Reading from the N-terminus, the 559-residue chain is Thermosome subunit alpha (559 aa).

Positions 535-547 (SEKKGGEGSKEES) are enriched in basic and acidic residues. Residues 535–559 (SEKKGGEGSKEESGGEGGSTPSLGD) form a disordered region.

The protein belongs to the TCP-1 chaperonin family. As to quaternary structure, forms a Heterooligomeric complex of two stacked eight-membered rings.

In terms of biological role, molecular chaperone; binds unfolded polypeptides in vitro, and has a weak ATPase activity. The protein is Thermosome subunit alpha (thsA) of Saccharolobus solfataricus (strain ATCC 35092 / DSM 1617 / JCM 11322 / P2) (Sulfolobus solfataricus).